Reading from the N-terminus, the 492-residue chain is Bifunctional protein GlmU (492 aa).

The segment at 1–241 (MTFRGDTAVV…SALVAGVNDR (241 aa)) is pyrophosphorylase. Residues 12–15 (LAAG), Lys26, Gln83, and 88–89 (GT) each bind UDP-N-acetyl-alpha-D-glucosamine. Residue Asp114 participates in Mg(2+) binding. Residues Gly151, Glu166, Asn181, and Asn239 each contribute to the UDP-N-acetyl-alpha-D-glucosamine site. Asn239 contacts Mg(2+). The interval 242 to 262 (VQLAQLGAELNRRIVAAHQMA) is linker. The segment at 263-492 (GVTVIDPATT…TPPPDADHPP (230 aa)) is N-acetyltransferase. Arg344 and Lys362 together coordinate UDP-N-acetyl-alpha-D-glucosamine. Catalysis depends on His374, which acts as the Proton acceptor. UDP-N-acetyl-alpha-D-glucosamine is bound by residues Tyr377 and Asn388. Residues Ala391, 397-398 (NY), and Ala434 each bind acetyl-CoA. A disordered region spans residues 443-492 (PPGALAVSGGPQRNIEDWVQQKRPGTPSAEAARKASAEQSTPPPDADHPP).

This sequence in the N-terminal section; belongs to the N-acetylglucosamine-1-phosphate uridyltransferase family. It in the C-terminal section; belongs to the transferase hexapeptide repeat family. Homotrimer. It depends on Mg(2+) as a cofactor.

Its subcellular location is the cytoplasm. It catalyses the reaction alpha-D-glucosamine 1-phosphate + acetyl-CoA = N-acetyl-alpha-D-glucosamine 1-phosphate + CoA + H(+). It carries out the reaction N-acetyl-alpha-D-glucosamine 1-phosphate + UTP + H(+) = UDP-N-acetyl-alpha-D-glucosamine + diphosphate. Its pathway is nucleotide-sugar biosynthesis; UDP-N-acetyl-alpha-D-glucosamine biosynthesis; N-acetyl-alpha-D-glucosamine 1-phosphate from alpha-D-glucosamine 6-phosphate (route II): step 2/2. It functions in the pathway nucleotide-sugar biosynthesis; UDP-N-acetyl-alpha-D-glucosamine biosynthesis; UDP-N-acetyl-alpha-D-glucosamine from N-acetyl-alpha-D-glucosamine 1-phosphate: step 1/1. It participates in bacterial outer membrane biogenesis; LPS lipid A biosynthesis. Functionally, catalyzes the last two sequential reactions in the de novo biosynthetic pathway for UDP-N-acetylglucosamine (UDP-GlcNAc). The C-terminal domain catalyzes the transfer of acetyl group from acetyl coenzyme A to glucosamine-1-phosphate (GlcN-1-P) to produce N-acetylglucosamine-1-phosphate (GlcNAc-1-P), which is converted into UDP-GlcNAc by the transfer of uridine 5-monophosphate (from uridine 5-triphosphate), a reaction catalyzed by the N-terminal domain. This chain is Bifunctional protein GlmU, found in Mycobacterium ulcerans (strain Agy99).